The sequence spans 595 residues: P2X purinoceptor 7 (595 aa).

At 1–22 (MPACCSWNDVLQYETNKVTRIQ) the chain is on the cytoplasmic side. Cys4 carries the S-palmitoyl cysteine lipid modification. The chain crosses the membrane as a helical span at residues 23-46 (STNYGTVKWVLHMIVFSYISFALV). The Extracellular segment spans residues 47-328 (SDKLYQRKEP…ILVFGTGGKF (282 aa)). Residue Asn74 is glycosylated (N-linked (GlcNAc...) asparagine). 3 cysteine pairs are disulfide-bonded: Cys119-Cys168, Cys129-Cys152, and Cys135-Cys162. Arg125 and Arg133 each carry ADP-ribosylarginine; by ART2B. A glycan (N-linked (GlcNAc...) asparagine) is linked at Asn187. Thr189 contributes to the ATP binding site. 2 N-linked (GlcNAc...) asparagine glycosylation sites follow: Asn202 and Asn213. Cysteines 216 and 226 form a disulfide. N-linked (GlcNAc...) asparagine glycosylation occurs at Asn241. Residues Cys260 and Cys269 are joined by a disulfide bond. ATP contacts are provided by Arg294 and Lys311. A helical transmembrane segment spans residues 329-353 (DIIQLVVYIGSTLSYFGLATVCIDL). Ser342 serves as a coordination point for Na(+). At 354–595 (LINTYSSAFC…GQYSGFKYPY (242 aa)) the chain is on the cytoplasmic side. Residues 360–377 (SAFCRSGVYPYCKCCEPC) are C-cys anchor. Residues Cys363, Cys374, and Cys377 are each lipidated (S-palmitoyl cysteine). Ser390 carries the phosphoserine modification. The interval 395–595 (KPTLKYVSFV…GQYSGFKYPY (201 aa)) is cytoplasmic ballast. Zn(2+) contacts are provided by Cys479, Cys499, and Cys506. GTP contacts are provided by Arg546, His547, Tyr550, and Ala567. A Zn(2+)-binding site is contributed by Cys572. Residues Lys583, Ser589, and Gly590 each contribute to the GTP site.

Belongs to the P2X receptor family. As to quaternary structure, homotrimers. Interacts with LAMA3, ITGB2, ACTB, ACTN4, SVIL, MPP3, HSPA1, HSPCB, HSPA8, PIK230 and PTPRB. Interacts (via C-terminus) with EMP2. Phosphorylation results in its inactivation. In terms of processing, ADP-ribosylation at Arg-125 is necessary and sufficient to activate P2RX7 and gate the channel. Post-translationally, palmitoylation of several cysteines in the C-terminal cytoplasmic tail is required for efficient localization to cell surface. Palmitoylation prevents channel desensitization by physically anchoring the palmitoylated groups to the membrane.

Its subcellular location is the cell membrane. It catalyses the reaction Ca(2+)(in) = Ca(2+)(out). It carries out the reaction K(+)(in) = K(+)(out). The catalysed reaction is Na(+)(in) = Na(+)(out). With respect to regulation, activated by high extracellular ATP levels (0.1-2.5 mM). The synthetic analog 2'(3')-O-(4-benzoylbenzoyl)ATP (BzATP) acts as a potent agonist. Does not undergo desensitization, instead, undergoes a facilitation process where currents progressively increase with repetitive or prolonged agonist application. Palmitoylation prevents channel desensitization. The permeability of the P2RX7 channel is modulated by the amount of cholesterol in the plasma membrane. Functionally, ATP-gated nonselective transmembrane cation channel. Requires high millimolar-range concentrations of ATP to become activated. ATP binding trigers the rapid opening of the channel and allows Na(+) and Ca(2+) influx and K(+) efflux. Has also the ability to form a large pore in the cell membrane, allowing the passage of large cationic molecules. In microglia, may mediate NADPH transport across the plasma membrane. In immune cells, P2RX7 acts as a molecular sensor in pathological inflammatory states by detecting and responding to high local concentrations of extracellar ATP. In microglial cells, P2RX7 activation leads to the release of pro-inflammatory cytokines, such as IL-1beta and IL-18, through the activation of the NLRP3 inflammasome and caspase-1. Cooperates with KCNK6 to activate NLRP3 inflammasome. Activates death pathways leading to apoptosis and autophagy. Activates death pathways leading to pyroptosis. The polypeptide is P2X purinoceptor 7 (P2rx7) (Mus musculus (Mouse)).